Reading from the N-terminus, the 209-residue chain is Large ribosomal subunit protein uL3 (209 aa).

The interval 128–163 is disordered; that stretch reads FGGGSRTHGQSDRLRAPGSVGGSSDPSRTFRGTRMA.

It belongs to the universal ribosomal protein uL3 family. Part of the 50S ribosomal subunit. Forms a cluster with proteins L14 and L19.

Functionally, one of the primary rRNA binding proteins, it binds directly near the 3'-end of the 23S rRNA, where it nucleates assembly of the 50S subunit. This chain is Large ribosomal subunit protein uL3, found in Chlorobium phaeobacteroides (strain DSM 266 / SMG 266 / 2430).